Here is a 104-residue protein sequence, read N- to C-terminus: Flagellar hook-basal body complex protein FliE (104 aa).

It belongs to the FliE family.

Its subcellular location is the bacterial flagellum basal body. This Escherichia fergusonii (strain ATCC 35469 / DSM 13698 / CCUG 18766 / IAM 14443 / JCM 21226 / LMG 7866 / NBRC 102419 / NCTC 12128 / CDC 0568-73) protein is Flagellar hook-basal body complex protein FliE.